The primary structure comprises 72 residues: Protein CYSTEINE-RICH TRANSMEMBRANE MODULE 9 (72 aa).

The span at 1-22 (MNPSEQNHLSVEKPSQTSSGPY) shows a compositional bias: polar residues. A disordered region spans residues 1–46 (MNPSEQNHLSVEKPSQTSSGPYTSPPPIGYPTRDAMVGDPPAAAVE). A helical membrane pass occupies residues 49 to 65 (SKGDGFWKGCCAAICCC).

The protein belongs to the CYSTM1 family. As to quaternary structure, heterodimers. Interacts with WIH1/CYSTM13. In terms of tissue distribution, mostly expressed in roots and flowers and, to a lower extent, in stems, siliques and leaves.

The protein localises to the cell membrane. It localises to the nucleus. In terms of biological role, involved in resistance to abiotic stress. This Arabidopsis thaliana (Mouse-ear cress) protein is Protein CYSTEINE-RICH TRANSMEMBRANE MODULE 9.